The primary structure comprises 158 residues: Putative zinc-binding protein ORF9 (158 aa).

An RING-type; degenerate zinc finger spans residues 72-111; that stretch reads CPVCGRAVVGPTVREACGHVTCNACETEACAVDRLCIGGG. The segment at 126-158 is disordered; it reads GPRWRGPRPTRPEAHEAVQRSRGSSEDACTCAP. Residues 135–150 are compositionally biased toward basic and acidic residues; that stretch reads TRPEAHEAVQRSRGSS.

The polypeptide is Putative zinc-binding protein ORF9 (ORF9) (Ictalurid herpesvirus 1 (strain Auburn) (IcHV-1)).